The following is a 277-amino-acid chain: Large ribosomal subunit protein uL2 (277 aa).

Disordered regions lie at residues 35-60 (EKQS…GHKQ) and 225-277 (MNPV…ANKR). A compositionally biased stretch (polar residues) spans 43–53 (RNNNGHITTRH).

It belongs to the universal ribosomal protein uL2 family. As to quaternary structure, part of the 50S ribosomal subunit. Forms a bridge to the 30S subunit in the 70S ribosome.

One of the primary rRNA binding proteins. Required for association of the 30S and 50S subunits to form the 70S ribosome, for tRNA binding and peptide bond formation. It has been suggested to have peptidyltransferase activity; this is somewhat controversial. Makes several contacts with the 16S rRNA in the 70S ribosome. The polypeptide is Large ribosomal subunit protein uL2 (Methylobacillus flagellatus (strain ATCC 51484 / DSM 6875 / VKM B-1610 / KT)).